The sequence spans 1577 residues: Pentafunctional AROM polypeptide (1577 aa).

The interval 1–392 is 3-dehydroquinate synthase; the sequence is MASVGLEKVN…YGTSAHVVSD (392 aa). NAD(+) is bound by residues 80–83, 111–113, and Asp-116; these read ETYK and GGV. Arg-127 is a binding site for 7-phospho-2-dehydro-3-deoxy-D-arabino-heptonate. NAD(+) is bound at residue 136 to 137; the sequence is TS. 7-phospho-2-dehydro-3-deoxy-D-arabino-heptonate-binding residues include Asp-143 and Lys-149. Residue Lys-158 participates in NAD(+) binding. Residue Asn-159 participates in 7-phospho-2-dehydro-3-deoxy-D-arabino-heptonate binding. NAD(+) contacts are provided by residues 176–179 and Asn-187; that span reads WLET. Residue Glu-191 coordinates Zn(2+). 7-phospho-2-dehydro-3-deoxy-D-arabino-heptonate is bound by residues 191-194 and Lys-258; that span reads EVIK. Glu-268 functions as the Proton acceptor; for 3-dehydroquinate synthase activity in the catalytic mechanism. Residues 272 to 276 and His-279 contribute to the 7-phospho-2-dehydro-3-deoxy-D-arabino-heptonate site; that span reads RNLLN. His-279 is a Zn(2+) binding site. His-283 acts as the Proton acceptor; for 3-dehydroquinate synthase activity in catalysis. 7-phospho-2-dehydro-3-deoxy-D-arabino-heptonate is bound by residues His-295 and Lys-364. His-295 is a Zn(2+) binding site. The tract at residues 405–863 is EPSP synthase; the sequence is VYPFTDVRSS…WDVLHSRLGA (459 aa). Residue Cys-845 is the For EPSP synthase activity of the active site. Residues 882-1071 are shikimate kinase; the sequence is VVLIGMRAAG…VPVKRSTFVC (190 aa). ATP is bound at residue 886-893; it reads GMRAAGKS. The 3-dehydroquinase stretch occupies residues 1072–1284; it reads LTFQNLLPEM…AAPGQLTLRQ (213 aa). His-1189 acts as the Proton acceptor; for 3-dehydroquinate dehydratase activity in catalysis. Residue Lys-1218 is the Schiff-base intermediate with substrate; for 3-dehydroquinate dehydratase activity of the active site. Positions 1297-1577 are shikimate dehydrogenase; the sequence is PKKMFVVGSP…APVYDAVTQE (281 aa).

In the N-terminal section; belongs to the sugar phosphate cyclases superfamily. Dehydroquinate synthase family. It in the 2nd section; belongs to the EPSP synthase family. This sequence in the 3rd section; belongs to the shikimate kinase family. The protein in the 4th section; belongs to the type-I 3-dehydroquinase family. In the C-terminal section; belongs to the shikimate dehydrogenase family. Homodimer. Requires Zn(2+) as cofactor.

Its subcellular location is the cytoplasm. It catalyses the reaction 7-phospho-2-dehydro-3-deoxy-D-arabino-heptonate = 3-dehydroquinate + phosphate. It carries out the reaction 3-dehydroquinate = 3-dehydroshikimate + H2O. The enzyme catalyses shikimate + NADP(+) = 3-dehydroshikimate + NADPH + H(+). The catalysed reaction is shikimate + ATP = 3-phosphoshikimate + ADP + H(+). It catalyses the reaction 3-phosphoshikimate + phosphoenolpyruvate = 5-O-(1-carboxyvinyl)-3-phosphoshikimate + phosphate. The protein operates within metabolic intermediate biosynthesis; chorismate biosynthesis; chorismate from D-erythrose 4-phosphate and phosphoenolpyruvate: step 2/7. Its pathway is metabolic intermediate biosynthesis; chorismate biosynthesis; chorismate from D-erythrose 4-phosphate and phosphoenolpyruvate: step 3/7. It functions in the pathway metabolic intermediate biosynthesis; chorismate biosynthesis; chorismate from D-erythrose 4-phosphate and phosphoenolpyruvate: step 4/7. It participates in metabolic intermediate biosynthesis; chorismate biosynthesis; chorismate from D-erythrose 4-phosphate and phosphoenolpyruvate: step 5/7. The protein operates within metabolic intermediate biosynthesis; chorismate biosynthesis; chorismate from D-erythrose 4-phosphate and phosphoenolpyruvate: step 6/7. The AROM polypeptide catalyzes 5 consecutive enzymatic reactions in prechorismate polyaromatic amino acid biosynthesis. This is Pentafunctional AROM polypeptide from Eremothecium gossypii (strain ATCC 10895 / CBS 109.51 / FGSC 9923 / NRRL Y-1056) (Yeast).